Here is a 127-residue protein sequence, read N- to C-terminus: Small ribosomal subunit protein uS12 (127 aa).

Asp89 is modified (3-methylthioaspartic acid).

The protein belongs to the universal ribosomal protein uS12 family. In terms of assembly, part of the 30S ribosomal subunit. Contacts proteins S8 and S17. May interact with IF1 in the 30S initiation complex.

With S4 and S5 plays an important role in translational accuracy. Its function is as follows. Interacts with and stabilizes bases of the 16S rRNA that are involved in tRNA selection in the A site and with the mRNA backbone. Located at the interface of the 30S and 50S subunits, it traverses the body of the 30S subunit contacting proteins on the other side and probably holding the rRNA structure together. The combined cluster of proteins S8, S12 and S17 appears to hold together the shoulder and platform of the 30S subunit. This chain is Small ribosomal subunit protein uS12, found in Aliarcobacter butzleri (strain RM4018) (Arcobacter butzleri).